Reading from the N-terminus, the 251-residue chain is tRNA pseudouridine synthase A (251 aa).

The active-site Nucleophile is the D56. Y110 serves as a coordination point for substrate.

Belongs to the tRNA pseudouridine synthase TruA family.

It catalyses the reaction uridine(38/39/40) in tRNA = pseudouridine(38/39/40) in tRNA. Its function is as follows. Formation of pseudouridine at positions 38, 39 and 40 in the anticodon stem and loop of transfer RNAs. This chain is tRNA pseudouridine synthase A, found in Picrophilus torridus (strain ATCC 700027 / DSM 9790 / JCM 10055 / NBRC 100828 / KAW 2/3).